The chain runs to 297 residues: Ribosomal RNA small subunit methyltransferase H (297 aa).

S-adenosyl-L-methionine-binding positions include 30–32 (GGY), Asp48, Phe75, Asp96, and Gln103.

Belongs to the methyltransferase superfamily. RsmH family.

It localises to the cytoplasm. The enzyme catalyses cytidine(1402) in 16S rRNA + S-adenosyl-L-methionine = N(4)-methylcytidine(1402) in 16S rRNA + S-adenosyl-L-homocysteine + H(+). Functionally, specifically methylates the N4 position of cytidine in position 1402 (C1402) of 16S rRNA. This chain is Ribosomal RNA small subunit methyltransferase H, found in Ehrlichia canis (strain Jake).